The following is a 155-amino-acid chain: MAVKIKLTRLGKIRNPQYRIQVADARTRREGRAIEVIGRYHPKEEPSLIEIDSERAQYWLSVGAQPTDPVLALLKITGDWQKFKGLPGAEGTLKVKEPKPSKLDLFNAALAEADGAPTGEAIQQKKKKAPKKAEAAEAEAPAEEPAAESADAASE.

The disordered stretch occupies residues 113–155 (ADGAPTGEAIQQKKKKAPKKAEAAEAEAPAEEPAAESADAASE). The segment covering 136–146 (AEAEAPAEEPA) has biased composition (acidic residues).

It belongs to the bacterial ribosomal protein bS16 family.

This Mycobacteroides abscessus (strain ATCC 19977 / DSM 44196 / CCUG 20993 / CIP 104536 / JCM 13569 / NCTC 13031 / TMC 1543 / L948) (Mycobacterium abscessus) protein is Small ribosomal subunit protein bS16.